The primary structure comprises 206 residues: Small ribosomal subunit protein uS4 (206 aa).

In terms of domain architecture, S4 RNA-binding spans 96 to 168 (SRLDNVVYRM…LELAEQREKP (73 aa)).

It belongs to the universal ribosomal protein uS4 family. Part of the 30S ribosomal subunit. Contacts protein S5. The interaction surface between S4 and S5 is involved in control of translational fidelity.

One of the primary rRNA binding proteins, it binds directly to 16S rRNA where it nucleates assembly of the body of the 30S subunit. Functionally, with S5 and S12 plays an important role in translational accuracy. The protein is Small ribosomal subunit protein uS4 of Baumannia cicadellinicola subsp. Homalodisca coagulata.